The following is a 516-amino-acid chain: 2,3-bisphosphoglycerate-independent phosphoglycerate mutase (516 aa).

Asp-13 and Ser-63 together coordinate Mn(2+). The active-site Phosphoserine intermediate is the Ser-63. Substrate is bound by residues His-124, 154–155 (RD), Arg-186, Arg-192, 262–265 (RPDR), and Lys-337. 5 residues coordinate Mn(2+): Asp-404, His-408, Asp-445, His-446, and His-464.

It belongs to the BPG-independent phosphoglycerate mutase family. As to quaternary structure, monomer. Mn(2+) serves as cofactor.

The catalysed reaction is (2R)-2-phosphoglycerate = (2R)-3-phosphoglycerate. The protein operates within carbohydrate degradation; glycolysis; pyruvate from D-glyceraldehyde 3-phosphate: step 3/5. Catalyzes the interconversion of 2-phosphoglycerate and 3-phosphoglycerate. The sequence is that of 2,3-bisphosphoglycerate-independent phosphoglycerate mutase from Cellvibrio japonicus (strain Ueda107) (Pseudomonas fluorescens subsp. cellulosa).